The primary structure comprises 430 residues: Adenylosuccinate synthetase (430 aa).

Residues 13–19 (GDEGKGK) and 41–43 (GHT) each bind GTP. D14 functions as the Proton acceptor in the catalytic mechanism. Mg(2+)-binding residues include D14 and G41. Residues 14–17 (DEGK), 39–42 (NAGH), T130, R144, Q225, T240, and R304 each bind IMP. H42 serves as the catalytic Proton donor. Substrate is bound at residue 300 to 306 (ATTGRAR). Residues R306, 332–334 (KLD), and 414–416 (STG) contribute to the GTP site.

It belongs to the adenylosuccinate synthetase family. As to quaternary structure, homodimer. Mg(2+) is required as a cofactor.

It is found in the cytoplasm. It carries out the reaction IMP + L-aspartate + GTP = N(6)-(1,2-dicarboxyethyl)-AMP + GDP + phosphate + 2 H(+). The protein operates within purine metabolism; AMP biosynthesis via de novo pathway; AMP from IMP: step 1/2. Functionally, plays an important role in the de novo pathway of purine nucleotide biosynthesis. Catalyzes the first committed step in the biosynthesis of AMP from IMP. The polypeptide is Adenylosuccinate synthetase (Pseudomonas aeruginosa (strain LESB58)).